The primary structure comprises 229 residues: Potassium/proton antiporter CemA (229 aa).

Transmembrane regions (helical) follow at residues 6–26, 107–127, and 189–209; these read AFIP…ISLC, ILHF…SFWG, and ILSG…KYWI.

It belongs to the CemA family.

Its subcellular location is the plastid. It is found in the chloroplast inner membrane. It catalyses the reaction K(+)(in) + H(+)(out) = K(+)(out) + H(+)(in). Its function is as follows. Contributes to K(+)/H(+) antiport activity by supporting proton efflux to control proton extrusion and homeostasis in chloroplasts in a light-dependent manner to modulate photosynthesis. Prevents excessive induction of non-photochemical quenching (NPQ) under continuous-light conditions. Indirectly promotes efficient inorganic carbon uptake into chloroplasts. This chain is Potassium/proton antiporter CemA, found in Olimarabidopsis pumila (Dwarf rocket).